Reading from the N-terminus, the 149-residue chain is Large ribosomal subunit protein bL20m (149 aa).

The transit peptide at 1–9 (MVFLSLSRW) directs the protein to the mitochondrion.

Belongs to the bacterial ribosomal protein bL20 family. Component of the mitochondrial ribosome large subunit (39S) which comprises a 16S rRNA and about 50 distinct proteins.

It is found in the mitochondrion. The protein is Large ribosomal subunit protein bL20m (mrpl20) of Xenopus laevis (African clawed frog).